We begin with the raw amino-acid sequence, 389 residues long: uncharacterized protein (389 aa).

Residues 1-23 (MHFAKLGAIGLLGSIICAYAASA) form the signal peptide.

This sequence belongs to the IUNH family.

Its subcellular location is the endoplasmic reticulum lumen. This is an uncharacterized protein from Schizosaccharomyces pombe (strain 972 / ATCC 24843) (Fission yeast).